Consider the following 121-residue polypeptide: Large ribosomal subunit protein uL14 (121 aa).

This sequence belongs to the universal ribosomal protein uL14 family. In terms of assembly, part of the 50S ribosomal subunit. Forms a cluster with proteins L3 and L19. In the 70S ribosome, L14 and L19 interact and together make contacts with the 16S rRNA in bridges B5 and B8.

In terms of biological role, binds to 23S rRNA. Forms part of two intersubunit bridges in the 70S ribosome. This Pseudoalteromonas atlantica (strain T6c / ATCC BAA-1087) protein is Large ribosomal subunit protein uL14.